Reading from the N-terminus, the 342-residue chain is DNA primase small subunit PriS (342 aa).

Active-site residues include Asp97, Asp99, and Asp236.

The protein belongs to the eukaryotic-type primase small subunit family. As to quaternary structure, heterodimer of a small subunit (PriS) and a large subunit (PriL). It depends on Mg(2+) as a cofactor. Mn(2+) is required as a cofactor.

Its function is as follows. Catalytic subunit of DNA primase, an RNA polymerase that catalyzes the synthesis of short RNA molecules used as primers for DNA polymerase during DNA replication. The small subunit contains the primase catalytic core and has DNA synthesis activity on its own. Binding to the large subunit stabilizes and modulates the activity, increasing the rate of DNA synthesis while decreasing the length of the DNA fragments, and conferring RNA synthesis capability. The DNA polymerase activity may enable DNA primase to also catalyze primer extension after primer synthesis. May also play a role in DNA repair. The polypeptide is DNA primase small subunit PriS (Aeropyrum pernix (strain ATCC 700893 / DSM 11879 / JCM 9820 / NBRC 100138 / K1)).